Here is an 86-residue protein sequence, read N- to C-terminus: Anti-adapter protein IraP (86 aa).

Residues 1-36 (MKNLIAELLLKLAQKEEESKELCAQVEALEIIVTAM) are a coiled coil.

Belongs to the IraP family. In terms of assembly, interacts with RssB.

The protein localises to the cytoplasm. Functionally, inhibits RpoS proteolysis by regulating RssB activity, thereby increasing the stability of the sigma stress factor RpoS especially during phosphate starvation, but also in stationary phase and during nitrogen starvation. Its effect on RpoS stability is due to its interaction with RssB, which probably blocks the interaction of RssB with RpoS, and the consequent delivery of the RssB-RpoS complex to the ClpXP protein degradation pathway. The polypeptide is Anti-adapter protein IraP (Shigella boydii serotype 18 (strain CDC 3083-94 / BS512)).